A 1036-amino-acid polypeptide reads, in one-letter code: Isoleucine--tRNA ligase (1036 aa).

The short motif at proline 46–histidine 56 is the 'HIGH' region element. The short motif at lysine 589–arginine 593 is the 'KMSKS' region element. Lysine 592 contributes to the ATP binding site.

It belongs to the class-I aminoacyl-tRNA synthetase family. IleS type 2 subfamily. Monomer. Zn(2+) is required as a cofactor.

The protein resides in the cytoplasm. It carries out the reaction tRNA(Ile) + L-isoleucine + ATP = L-isoleucyl-tRNA(Ile) + AMP + diphosphate. In terms of biological role, catalyzes the attachment of isoleucine to tRNA(Ile). As IleRS can inadvertently accommodate and process structurally similar amino acids such as valine, to avoid such errors it has two additional distinct tRNA(Ile)-dependent editing activities. One activity is designated as 'pretransfer' editing and involves the hydrolysis of activated Val-AMP. The other activity is designated 'posttransfer' editing and involves deacylation of mischarged Val-tRNA(Ile). The protein is Isoleucine--tRNA ligase of Chlamydia trachomatis serovar L2b (strain UCH-1/proctitis).